A 341-amino-acid polypeptide reads, in one-letter code: MIRADLATIPTYVPGRRLNNATKLSSNEVSFSPLPAAVDAVTEATQGANRYPDMGAVELREALAEHLEVEFDQVTVGCGSSALCQQLVQATCAQGDEVIFPWRSFEAYPIFAQVAGATPVAIPLTADQNHDLDAMAAAITDKTRLIFICNPNNPSGTTITQAQFDNFMEKVPNDVVVGLDEAYFEFNRADDTPVATEEIHRHDNVIGLRTFSKAYGLAGLRVGYAFGNAEIIAAMNKVAIPFAVNSAAQAAALASLNSADELMERVEETVEKRDAVVAALGTAPTQANFVWLPGEGAAELAAKLAEHGIVIRAFPEGARISVTNAEETDKLLRAWEAINAG.

Position 213 is an N6-(pyridoxal phosphate)lysine (Lys213).

This sequence belongs to the class-II pyridoxal-phosphate-dependent aminotransferase family. Homodimer. Requires pyridoxal 5'-phosphate as cofactor.

It catalyses the reaction an aromatic L-alpha-amino acid + 2-oxoglutarate = an aromatic oxo-acid + L-glutamate. Aminotransferase that catalyzes the conversion of aromatic amino acids and 2-oxoglutarate into corresponding aromatic oxo acids and L-glutamate. This chain is Aromatic amino acid aminotransferase, found in Corynebacterium glutamicum (strain R).